The chain runs to 310 residues: Ribosomal protein L11 methyltransferase (310 aa).

Residues Thr153, Gly174, Asp196, and Asn239 each contribute to the S-adenosyl-L-methionine site.

Belongs to the methyltransferase superfamily. PrmA family.

The protein resides in the cytoplasm. The catalysed reaction is L-lysyl-[protein] + 3 S-adenosyl-L-methionine = N(6),N(6),N(6)-trimethyl-L-lysyl-[protein] + 3 S-adenosyl-L-homocysteine + 3 H(+). Functionally, methylates ribosomal protein L11. This Janthinobacterium sp. (strain Marseille) (Minibacterium massiliensis) protein is Ribosomal protein L11 methyltransferase.